The chain runs to 257 residues: Receptor expression-enhancing protein 4 (257 aa).

The next 2 membrane-spanning stretches (helical) occupy residues 1 to 21 (MVSW…CPAY) and 42 to 62 (WIVF…ISWF). Ser152 and Ser194 each carry phosphoserine. Positions 183-257 (PIGYRAGGLQ…KKTVPSDVDS (75 aa)) are disordered. Thr196 carries the phosphothreonine modification. Ser202 is modified (phosphoserine). Thr250 is subject to Phosphothreonine. Ser253 carries the phosphoserine modification.

The protein belongs to the DP1 family. In terms of tissue distribution, expressed in circumvallate papillae and testis.

The protein resides in the endoplasmic reticulum membrane. Its function is as follows. Microtubule-binding protein required to ensure proper cell division and nuclear envelope reassembly by sequestering the endoplasmic reticulum away from chromosomes during mitosis. Probably acts by clearing the endoplasmic reticulum membrane from metaphase chromosomes. This Homo sapiens (Human) protein is Receptor expression-enhancing protein 4 (REEP4).